We begin with the raw amino-acid sequence, 359 residues long: Putative ankyrin repeat protein R190 (359 aa).

ANK repeat units lie at residues 72-103 (RLMEIYHKMIIIDNNMDLLDLLFEIMSDDFRC), 105-133 (DCVILDLAIRHQRTDVFNKYIILGFDLNR), 142-173 (DEIILWYHQIKKYDTGIELCDYLIDNGASISI), 203-234 (LGNLLFWYLRNYYNVNIDIVETILSNGIDINN), 236-260 (HEYSYMLIGKFNVPIMNLFIRYGLI), 261-287 (IHDDVIDDACRYGNHLLVDYLMEIGHK), and 288-317 (PSKQIITNVIENHNVNIIKLFVKYNIDLSD).

This Acanthamoeba polyphaga (Amoeba) protein is Putative ankyrin repeat protein R190.